The chain runs to 502 residues: Cytochrome P450 71B19 (502 aa).

A helical transmembrane segment spans residues 1–21 (MAISFLCVFLITFVSLIFFAK). C444 lines the heme pocket.

This sequence belongs to the cytochrome P450 family. Heme is required as a cofactor.

It is found in the membrane. The protein is Cytochrome P450 71B19 (CYP71B19) of Arabidopsis thaliana (Mouse-ear cress).